The chain runs to 557 residues: Probable protein kinase UbiB (557 aa).

The 389-residue stretch at 121 to 509 (AFDTTPLASA…RKLQTRVVTA (389 aa)) folds into the Protein kinase domain. Residues 127 to 135 (LASASIAQV) and K154 contribute to the ATP site. Residue D289 is the Proton acceptor of the active site. 2 helical membrane passes run 506–526 (VVTA…YGLH) and 535–555 (VPVW…IAWL).

This sequence belongs to the ABC1 family. UbiB subfamily.

The protein localises to the cell inner membrane. Its pathway is cofactor biosynthesis; ubiquinone biosynthesis [regulation]. Its function is as follows. Is probably a protein kinase regulator of UbiI activity which is involved in aerobic coenzyme Q (ubiquinone) biosynthesis. The protein is Probable protein kinase UbiB of Xanthomonas campestris pv. campestris (strain B100).